A 198-amino-acid polypeptide reads, in one-letter code: Ribosome maturation factor RimP (198 aa).

This sequence belongs to the RimP family.

It is found in the cytoplasm. Its function is as follows. Required for maturation of 30S ribosomal subunits. This Rhizobium etli (strain ATCC 51251 / DSM 11541 / JCM 21823 / NBRC 15573 / CFN 42) protein is Ribosome maturation factor RimP.